The chain runs to 268 residues: Tryptophan synthase alpha chain (268 aa).

Catalysis depends on proton acceptor residues E49 and D60.

It belongs to the TrpA family. As to quaternary structure, tetramer of two alpha and two beta chains.

The catalysed reaction is (1S,2R)-1-C-(indol-3-yl)glycerol 3-phosphate + L-serine = D-glyceraldehyde 3-phosphate + L-tryptophan + H2O. Its pathway is amino-acid biosynthesis; L-tryptophan biosynthesis; L-tryptophan from chorismate: step 5/5. Its function is as follows. The alpha subunit is responsible for the aldol cleavage of indoleglycerol phosphate to indole and glyceraldehyde 3-phosphate. In Yersinia pestis bv. Antiqua (strain Antiqua), this protein is Tryptophan synthase alpha chain.